A 459-amino-acid polypeptide reads, in one-letter code: Anthocyanidin 3-O-glucoside 2''-O-glucosyltransferase (459 aa).

The Proton acceptor role is filled by His20. Residue His20 coordinates an anthocyanidin. Asp117 serves as the catalytic Charge relay. Residues Thr138, Val335, Gln337, His352, Trp355, Ser357, and Glu360 each contribute to the UDP-alpha-D-glucose site. Gly375 contacts an anthocyanidin. Residues Asp376 and Gln377 each coordinate UDP-alpha-D-glucose.

This sequence belongs to the UDP-glycosyltransferase family.

The enzyme catalyses an anthocyanidin 3-O-beta-D-glucoside + UDP-alpha-D-glucose = an anthocyanidin 3-O-sophoroside + UDP + 2 H(+). It participates in pigment biosynthesis; anthocyanin biosynthesis. In terms of biological role, glycosyltransferase that mediates the glucosylation of anthocyanidin 3-O-glucosides to yield anthocyanidin 3-O-sophorosides. 3-O-sophoroside derivatives are required for the color of flowers. In Ipomoea purpurea (Common morning glory), this protein is Anthocyanidin 3-O-glucoside 2''-O-glucosyltransferase (3GGT).